Consider the following 354-residue polypeptide: Replication factor C subunit 5 (354 aa).

Residues V5, S17, G43–T51, and R231 each bind ATP.

The protein belongs to the activator 1 small subunits family. In terms of assembly, replication factor C (RFC) is a heteropentamer of subunits RFC1, RFC2, RFC3, RFC4 and RFC5 and forms a complex with POL30/PCNA in the presence of ATP. Component of the RAD24-RFC complex which consists of RAD24, RFC2, RFC3, RFC4 and RFC5 and associates with the checkpoint clamp DDC1:MEC3:RAD17 complex. Component of the ELG1-RFC complex which consists of ELG1, RFC2, RFC3, RFC4 and RFC5. Component of the CTF18-RFC complex, which consists of CTF18, CTF8, DCC1, RFC2, RFC3, RFC4 and RFC5. RFC5 interacts with ECO1.

It is found in the nucleus. Functionally, component of ATP-dependent clamp loader (RFC and RFC-like) complexes for DNA clamps, such as the POL30/PCNA homotrimer and the checkpoint clamp DDC1:MEC3:RAD17 complex. During a clamp loading circle, the RFC:clamp complex binds to DNA and the recognition of the double-stranded/single-stranded junction stimulates ATP hydrolysis by RFC. The complex presumably provides bipartite ATP sites in which one subunit supplies a catalytic site for hydrolysis of ATP bound to the neighboring subunit. Dissociation of RFC from the clamp leaves the clamp encircling DNA. Component of the replication factor C (RFC or activator 1) complex which loads POL30/PCNA and acts during elongation of primed DNA templates by DNA polymerase delta and epsilon. RFC has an essential but redundant activity in sister chromatid cohesion establishment. Component of the RFC-like complex CTF18-RFC which is required for efficient establishment of chromosome cohesion during S-phase and may load or unload POL30/PCNA. Component of the RFC-like RAD24-RFC complex which loads the checkpoint clamp DDC1:MEC3:RAD17 complex and is involved in DNA repair pathways. Component of the RFC-like ELG1-RFC complex which appears to have a role in DNA replication, replication fork re-start, recombination and repair. This chain is Replication factor C subunit 5 (RFC5), found in Saccharomyces cerevisiae (strain ATCC 204508 / S288c) (Baker's yeast).